A 218-amino-acid chain; its full sequence is Ribose-5-phosphate isomerase A (218 aa).

Substrate contacts are provided by residues 28 to 31 (TGST), 81 to 84 (DGAD), and 94 to 97 (KGGG). The active-site Proton acceptor is E103. K121 is a binding site for substrate.

Belongs to the ribose 5-phosphate isomerase family. Homodimer.

The catalysed reaction is aldehydo-D-ribose 5-phosphate = D-ribulose 5-phosphate. Its pathway is carbohydrate degradation; pentose phosphate pathway; D-ribose 5-phosphate from D-ribulose 5-phosphate (non-oxidative stage): step 1/1. In terms of biological role, catalyzes the reversible conversion of ribose-5-phosphate to ribulose 5-phosphate. This chain is Ribose-5-phosphate isomerase A, found in Pseudoalteromonas atlantica (strain T6c / ATCC BAA-1087).